Reading from the N-terminus, the 68-residue chain is Large ribosomal subunit protein uL30 (68 aa).

Belongs to the universal ribosomal protein uL30 family. In terms of assembly, part of the 50S ribosomal subunit.

The protein is Large ribosomal subunit protein uL30 of Pseudarthrobacter chlorophenolicus (strain ATCC 700700 / DSM 12829 / CIP 107037 / JCM 12360 / KCTC 9906 / NCIMB 13794 / A6) (Arthrobacter chlorophenolicus).